Reading from the N-terminus, the 700-residue chain is MSADKFYIEKELSWLSFNERVLQEAADKTVPLIERIRFLGIFSNNLDEFYKVRFSDVKRRILINREQGGNDISKHLLSKMQSKALKLNERFDELYNELIRDMARRHIFLVNESQLDEAQQKWIIKYFQKEVLPHITPLMLTDEIDVLQFLKDEYAYIAVELKQQEQAKYALLEIPTDHLPRFIMVPEQKGKRKKTIILLDNIIRFCLNDIFRGFFDYDELNGYAMKMTRDAEYDLRHEVEYSLLEQMSEGLSQRLTALPVRFVYERDMPEDMLKYLCYKLKISHYDSLIPGGRYHNFKDFIAFPNVGRDYLENKPLPPLACADFEGYANAFDAIRNQDILLHYPYHSFEHITELVRQASFDPKVVSIKINVYRVAKNSRLMNSLIDAVHNGKRVTVVVELQARFDEEANIEWSKLLTDAGVHVIFGVPGMKIHAKLLLITRREEQGFVRYAHIGTGNFHERTARIYTDFSLLTADQELAAEVRGVFSYIMNPFRPIKFRHLIVSPRNSRSQLYRLLDREIHNAQAGKKASITLKVNNLVDKGLISKLYAASSAGVKIRMIIRGMCSLVPGLEGISENIEIISIIDRFLEHPRVLVVHNDGDPQVFISSADWMERNIDNRIEVMSPVRDARIKQRIIDILSIQFTDTVKARRIDKEMSNNYVERGNRKKIRSQIAIYDYLKNVEKHTRKQKGQVEPNDNNQ.

Asn45 contributes to the ATP binding site. Mg(2+) contacts are provided by Arg373 and Arg403. Positions 428–462 (PGMKIHAKLLLITRREEQGFVRYAHIGTGNFHERT) constitute a PLD phosphodiesterase 1 domain. His433 (phosphohistidine intermediate) is an active-site residue. Residues Tyr466, Arg562, and His590 each coordinate ATP. A PLD phosphodiesterase 2 domain is found at 585 to 615 (DRFLEHPRVLVVHNDGDPQVFISSADWMERN).

It belongs to the polyphosphate kinase 1 (PPK1) family. Requires Mg(2+) as cofactor. Post-translationally, an intermediate of this reaction is the autophosphorylated ppk in which a phosphate is covalently linked to a histidine residue through a N-P bond.

It catalyses the reaction [phosphate](n) + ATP = [phosphate](n+1) + ADP. Functionally, catalyzes the reversible transfer of the terminal phosphate of ATP to form a long-chain polyphosphate (polyP). The protein is Polyphosphate kinase of Vibrio vulnificus (strain CMCP6).